The primary structure comprises 222 residues: Large ribosomal subunit protein uL1 (222 aa).

This sequence belongs to the universal ribosomal protein uL1 family. Part of the 50S ribosomal subunit.

Functionally, binds directly to 23S rRNA. Probably involved in E site tRNA release. Protein L1 is also a translational repressor protein, it controls the translation of its operon by binding to its mRNA. The sequence is that of Large ribosomal subunit protein uL1 from Pyrobaculum neutrophilum (strain DSM 2338 / JCM 9278 / NBRC 100436 / V24Sta) (Thermoproteus neutrophilus).